The sequence spans 99 residues: Transmembrane protein 14A (99 aa).

3 helical membrane passes run Met-1–Lys-21, Gly-24–Tyr-44, and Pro-79–Leu-99.

The protein belongs to the TMEM14 family.

It is found in the mitochondrion membrane. Its subcellular location is the endoplasmic reticulum membrane. Inhibits apoptosis via negative regulation of the mitochondrial outer membrane permeabilization involved in apoptotic signaling pathway. This is Transmembrane protein 14A (Tmem14a) from Mus musculus (Mouse).